Consider the following 256-residue polypeptide: Isoprenyl transferase (256 aa).

Asp-33 is an active-site residue. Position 33 (Asp-33) interacts with Mg(2+). Residues 34-37 (GNGR), Trp-38, Arg-46, His-50, and 78-80 (STE) contribute to the substrate site. The active-site Proton acceptor is the Asn-81. Substrate-binding positions include Trp-82, Arg-84, Arg-201, and 207–209 (RIS). Residue Glu-220 coordinates Mg(2+).

It belongs to the UPP synthase family. As to quaternary structure, homodimer. It depends on Mg(2+) as a cofactor.

In terms of biological role, catalyzes the condensation of isopentenyl diphosphate (IPP) with allylic pyrophosphates generating different type of terpenoids. This is Isoprenyl transferase from Staphylococcus epidermidis (strain ATCC 35984 / DSM 28319 / BCRC 17069 / CCUG 31568 / BM 3577 / RP62A).